Consider the following 328-residue polypeptide: Tetraacyldisaccharide 4'-kinase (328 aa).

55 to 62 (TAGGNGKT) is a binding site for ATP.

Belongs to the LpxK family.

It catalyses the reaction a lipid A disaccharide + ATP = a lipid IVA + ADP + H(+). The protein operates within glycolipid biosynthesis; lipid IV(A) biosynthesis; lipid IV(A) from (3R)-3-hydroxytetradecanoyl-[acyl-carrier-protein] and UDP-N-acetyl-alpha-D-glucosamine: step 6/6. In terms of biological role, transfers the gamma-phosphate of ATP to the 4'-position of a tetraacyldisaccharide 1-phosphate intermediate (termed DS-1-P) to form tetraacyldisaccharide 1,4'-bis-phosphate (lipid IVA). This is Tetraacyldisaccharide 4'-kinase from Escherichia coli O127:H6 (strain E2348/69 / EPEC).